The following is a 61-amino-acid chain: Large ribosomal subunit protein bL28 (61 aa).

A disordered region spans residues Met-1–Thr-24. The span at Lys-9 to Pro-23 shows a compositional bias: polar residues.

This sequence belongs to the bacterial ribosomal protein bL28 family.

This is Large ribosomal subunit protein bL28 from Lactobacillus acidophilus (strain ATCC 700396 / NCK56 / N2 / NCFM).